Reading from the N-terminus, the 466-residue chain is Cysteine--tRNA ligase (466 aa).

Cys29 lines the Zn(2+) pocket. Positions 31–41 (ATVQAAPHIGH) match the 'HIGH' region motif. The Zn(2+) site is built by Cys208, His233, and Glu237. Residues 264–268 (KMSKS) carry the 'KMSKS' region motif. Residue Lys267 participates in ATP binding.

Belongs to the class-I aminoacyl-tRNA synthetase family. As to quaternary structure, monomer. Zn(2+) serves as cofactor.

It is found in the cytoplasm. The catalysed reaction is tRNA(Cys) + L-cysteine + ATP = L-cysteinyl-tRNA(Cys) + AMP + diphosphate. This chain is Cysteine--tRNA ligase, found in Streptomyces griseus subsp. griseus (strain JCM 4626 / CBS 651.72 / NBRC 13350 / KCC S-0626 / ISP 5235).